The following is a 134-amino-acid chain: DNA-binding protein H-NS (134 aa).

Residues 111–116 (QGRTLA) mediate DNA binding.

This sequence belongs to the histone-like protein H-NS family. Homodimer that oligomerizes on DNA into higher-order complexes that form bridges between disparate regions of DNA compacting it. Interacts with YmoA and other similar proteins.

It is found in the cytoplasm. The protein localises to the nucleoid. In terms of biological role, a DNA-binding protein implicated in transcriptional repression and chromosome organization and compaction. Binds nucleation sites in AT-rich DNA and bridges them, forming higher-order nucleoprotein complexes and condensing the chromosome. As many horizontally transferred genes are AT-rich, it plays a central role in silencing foreign genes. A subset of genes are repressed by H-NS in association with other proteins. This Proteus vulgaris protein is DNA-binding protein H-NS (hns).